Consider the following 184-residue polypeptide: Photosystem I assembly protein Ycf4 (184 aa).

The next 2 membrane-spanning stretches (helical) occupy residues 22–42 (FFWA…GTSS) and 57–77 (IPFF…LFIS).

This sequence belongs to the Ycf4 family.

The protein resides in the plastid. It localises to the chloroplast thylakoid membrane. Seems to be required for the assembly of the photosystem I complex. The chain is Photosystem I assembly protein Ycf4 from Ceratophyllum demersum (Rigid hornwort).